The sequence spans 445 residues: Dihydroorotate dehydrogenase (quinone), mitochondrial (445 aa).

Residues 1–16 (MNSGFPRILSKKLFTL) constitute a mitochondrion transit peptide. Residues 39 to 56 (LLKYTVGIAIGSFAGFYF) traverse the membrane as a helical segment. FMN contacts are provided by residues 124–128 (AGLDK) and Ser-148. Position 128 (Lys-128) interacts with substrate. Substrate is bound at residue 173-177 (NRYGF). Asn-221 and Asn-251 together coordinate FMN. Residue 251 to 256 (NVSSPN) coordinates substrate. The active-site Nucleophile is Ser-254. Residues Lys-302 and Ser-330 each contribute to the FMN site. 331-332 (NT) serves as a coordination point for substrate. FMN contacts are provided by residues Gly-356, Gly-386, and 407-408 (YT).

This sequence belongs to the dihydroorotate dehydrogenase family. Type 2 subfamily. It depends on FMN as a cofactor.

The protein resides in the mitochondrion inner membrane. The catalysed reaction is (S)-dihydroorotate + a quinone = orotate + a quinol. It participates in pyrimidine metabolism; UMP biosynthesis via de novo pathway; orotate from (S)-dihydroorotate (quinone route): step 1/1. Its function is as follows. Catalyzes the conversion of dihydroorotate to orotate with quinone as electron acceptor. The sequence is that of Dihydroorotate dehydrogenase (quinone), mitochondrial (URA9) from Kluyveromyces lactis (strain ATCC 8585 / CBS 2359 / DSM 70799 / NBRC 1267 / NRRL Y-1140 / WM37) (Yeast).